Consider the following 643-residue polypeptide: 1-deoxy-D-xylulose-5-phosphate synthase (643 aa).

Thiamine diphosphate contacts are provided by residues His-79 and 120-122 (AHA). Mg(2+) is bound at residue Asp-151. Residues 152–153 (GS), Asn-180, Tyr-287, and Glu-369 contribute to the thiamine diphosphate site. Asn-180 contacts Mg(2+).

It belongs to the transketolase family. DXPS subfamily. As to quaternary structure, homodimer. Requires Mg(2+) as cofactor. Thiamine diphosphate serves as cofactor.

The catalysed reaction is D-glyceraldehyde 3-phosphate + pyruvate + H(+) = 1-deoxy-D-xylulose 5-phosphate + CO2. Its pathway is metabolic intermediate biosynthesis; 1-deoxy-D-xylulose 5-phosphate biosynthesis; 1-deoxy-D-xylulose 5-phosphate from D-glyceraldehyde 3-phosphate and pyruvate: step 1/1. Catalyzes the acyloin condensation reaction between C atoms 2 and 3 of pyruvate and glyceraldehyde 3-phosphate to yield 1-deoxy-D-xylulose-5-phosphate (DXP). In Maricaulis maris (strain MCS10) (Caulobacter maris), this protein is 1-deoxy-D-xylulose-5-phosphate synthase.